Here is a 104-residue protein sequence, read N- to C-terminus: Histone H4 (104 aa).

Positions 1–21 (MAGRGKVGKGYGKVGAKRHTK) are disordered.

This sequence belongs to the histone H4 family. In terms of assembly, the nucleosome is a histone octamer containing two molecules each of H2A, H2B, H3 and H4 assembled in one H3-H4 heterotetramer and two H2A-H2B heterodimers. The octamer wraps approximately 147 bp of DNA.

It is found in the nucleus. Its subcellular location is the chromosome. Its function is as follows. Core component of nucleosome. Nucleosomes wrap and compact DNA into chromatin, limiting DNA accessibility to the cellular machineries which require DNA as a template. Histones thereby play a central role in transcription regulation, DNA repair, DNA replication and chromosomal stability. DNA accessibility is regulated via a complex set of post-translational modifications of histones, also called histone code, and nucleosome remodeling. This is Histone H4 from Sterkiella nova (Ciliate).